The primary structure comprises 757 residues: 5-methyltetrahydropteroyltriglutamate--homocysteine methyltransferase (757 aa).

5-methyltetrahydropteroyltri-L-glutamate-binding positions include 16 to 19 (RELK) and Lys112. Residues 432 to 434 (IGS) and Glu485 contribute to the L-homocysteine site. L-methionine-binding positions include 432–434 (IGS) and Glu485. Residues 516–517 (RC) and Trp562 contribute to the 5-methyltetrahydropteroyltri-L-glutamate site. L-homocysteine is bound at residue Asp600. Asp600 serves as a coordination point for L-methionine. Glu606 is a binding site for 5-methyltetrahydropteroyltri-L-glutamate. The Zn(2+) site is built by His642, Cys644, and Glu666. His695 acts as the Proton donor in catalysis. Cys727 lines the Zn(2+) pocket.

This sequence belongs to the vitamin-B12 independent methionine synthase family. Zn(2+) serves as cofactor.

The catalysed reaction is 5-methyltetrahydropteroyltri-L-glutamate + L-homocysteine = tetrahydropteroyltri-L-glutamate + L-methionine. Its pathway is amino-acid biosynthesis; L-methionine biosynthesis via de novo pathway; L-methionine from L-homocysteine (MetE route): step 1/1. Catalyzes the transfer of a methyl group from 5-methyltetrahydrofolate to homocysteine resulting in methionine formation. This Actinobacillus pleuropneumoniae serotype 7 (strain AP76) protein is 5-methyltetrahydropteroyltriglutamate--homocysteine methyltransferase.